The following is a 636-amino-acid chain: Sodium-dependent proline transporter (636 aa).

Over 1–45 (MKKLQGAHLRKPVTPDLLMTPSDQGDVDLDVDFAAHRGNWTGKLD) the chain is Cytoplasmic. Residue threonine 20 is modified to Phosphothreonine. At serine 22 the chain carries Phosphoserine. 3 consecutive transmembrane segments (helical) span residues 46 to 66 (FLLS…FPYR), 74 to 93 (AFLV…LFFL), and 117 to 137 (GAGA…NMII). Residues 138 to 214 (AYVLFYLFAS…QGIGSPGEIR (77 aa)) lie on the Extracellular side of the membrane. N-linked (GlcNAc...) asparagine glycosylation occurs at asparagine 182. 9 helical membrane passes run 215–233 (WNLC…LCIL), 242–259 (VVYF…MLLV), 295–312 (IFYS…FASY), 324–345 (FIVT…FSVL), 378–397 (LPLS…TLGL), 425–443 (VFSG…ILTT), 459–479 (SFGL…VYGI), 500–519 (ACWL…YSIV), and 538–556 (LGIL…GMLV). The Cytoplasmic segment spans residues 557–636 (AVLREEGSLW…EIAEEEESMM (80 aa)). Serine 573 and serine 582 each carry phosphoserine. A Phosphothreonine modification is found at threonine 588. The residue at position 591 (tyrosine 591) is a Phosphotyrosine. 2 positions are modified to phosphoserine: serine 598 and serine 600.

The protein belongs to the sodium:neurotransmitter symporter (SNF) (TC 2.A.22) family. SLC6A7 subfamily. In terms of tissue distribution, brain specific (at protein level). Highly expressed in hippocampus, corpus striatum and temporal cortex. Also expressed in frontal cortex, occipital cortex and, at lower levels, in cerebellum and parietal cortex (at protein level).

Its subcellular location is the synaptic cell membrane. It carries out the reaction L-proline(out) + chloride(out) + 2 Na(+)(out) = L-proline(in) + chloride(in) + 2 Na(+)(in). The enzyme catalyses L-pipecolate(out) + chloride(out) + 2 Na(+)(out) = L-pipecolate(in) + chloride(in) + 2 Na(+)(in). Brain specific sodium (and chloride)-dependent proline transporter. Terminates the action of proline by its high affinity sodium-dependent reuptake into presynaptic terminals. This chain is Sodium-dependent proline transporter, found in Homo sapiens (Human).